We begin with the raw amino-acid sequence, 49 residues long: DNA-directed RNA polymerase subunit Rpo12 (49 aa).

Residues cysteine 11, cysteine 27, and cysteine 30 each coordinate Zn(2+).

This sequence belongs to the archaeal Rpo12/eukaryotic RPC10 RNA polymerase subunit family. As to quaternary structure, part of the RNA polymerase complex. The cofactor is Zn(2+).

It localises to the cytoplasm. It catalyses the reaction RNA(n) + a ribonucleoside 5'-triphosphate = RNA(n+1) + diphosphate. In terms of biological role, DNA-dependent RNA polymerase (RNAP) catalyzes the transcription of DNA into RNA using the four ribonucleoside triphosphates as substrates. This chain is DNA-directed RNA polymerase subunit Rpo12, found in Thermococcus onnurineus (strain NA1).